Here is a 494-residue protein sequence, read N- to C-terminus: Serine/threonine-protein kinase PBL13 (494 aa).

Residue C4 is the site of S-palmitoyl cysteine attachment. T65 bears the Phosphothreonine mark. In terms of domain architecture, Protein kinase spans 76-356; the sequence is FSSSNFLGEG…STVVSVLQDI (281 aa). ATP contacts are provided by residues 82 to 90 and K111; that span reads LGEGGFGPV. Phosphotyrosine is present on Y156. Residue D206 is the Proton acceptor of the active site. S210 is subject to Phosphoserine. S240 is subject to Phosphoserine; by autocatalysis. Residues T241 and T246 each carry the phosphothreonine modification. Y254 carries the post-translational modification Phosphotyrosine. At S321 the chain carries Phosphoserine; by autocatalysis. A phosphothreonine; by autocatalysis mark is found at T323 and T383. S384 is subject to Phosphoserine; by autocatalysis. Residues T395, T398, T406, T413, T421, and T428 each carry the phosphothreonine; by autocatalysis modification. At S429 the chain carries Phosphoserine; by autocatalysis. The segment at 434-471 is disordered; the sequence is DKTRREVKETSLQNFDKPRNVSTTDNHQKFRSPAHTAR. A Phosphothreonine; by autocatalysis modification is found at T443. Over residues 443 to 458 the composition is skewed to polar residues; it reads TSLQNFDKPRNVSTTD. Phosphoserine; by autocatalysis is present on residues S444 and S455. At T456 the chain carries Phosphothreonine; by autocatalysis. Over residues 462 to 471 the composition is skewed to basic residues; it reads KFRSPAHTAR. The residue at position 481 (Y481) is a Phosphotyrosine; by autocatalysis.

Belongs to the protein kinase superfamily. Ser/Thr protein kinase family. Interacts with RBHOD. Interaction is disrupted by flagellin-induced immune signaling.

The protein localises to the cell membrane. It carries out the reaction L-seryl-[protein] + ATP = O-phospho-L-seryl-[protein] + ADP + H(+). The catalysed reaction is L-threonyl-[protein] + ATP = O-phospho-L-threonyl-[protein] + ADP + H(+). Its function is as follows. Involved in defense responses. Acts as a negative regulator of plant immune responses. This is Serine/threonine-protein kinase PBL13 from Arabidopsis thaliana (Mouse-ear cress).